The primary structure comprises 310 residues: Retrotransposon Gag-like protein 4 (310 aa).

The CCHC-type zinc-finger motif lies at glutamine 278–alanine 295.

Involved in cognitive function in the brain, possibly via the noradrenergic system. The chain is Retrotransposon Gag-like protein 4 from Homo sapiens (Human).